Reading from the N-terminus, the 424-residue chain is STAM-binding protein (424 aa).

Residues 1-127 form an interaction with CHMP3 region; that stretch reads MSDHADVSLP…YEQYKERKKK (127 aa). Phosphoserine is present on residues serine 2 and serine 48. Positions 227–231 are interaction with STAM; that stretch reads PAKPP. Serine 243 bears the Phosphoserine mark. Positions 257–388 constitute an MPN domain; sequence IVVPRNLCSE…LTDYGLQEIS (132 aa). Zn(2+) is bound by residues histidine 335, histidine 337, aspartate 348, histidine 350, cysteine 390, histidine 396, and histidine 398. A JAMM motif motif is present at residues 335–348; it reads HTHPTQTAFLSSVD.

The protein belongs to the peptidase M67C family. In terms of assembly, interacts with STAM. Interacts with SMAD6 and SMAD7. Interacts with CHMP3; the interaction appears to relieve the autoinhibition of CHMP3. Interacts with SMURF2 and RNF11; this interaction promotes ubiquitination. Zn(2+) serves as cofactor. Post-translationally, phosphorylated after BMP type I receptor activation. In terms of processing, ubiquitinated by SMURF2 in the presence of RNF11.

The protein localises to the nucleus. Its subcellular location is the membrane. The protein resides in the cytoplasm. It is found in the early endosome. Inhibited by N-ethylmaleimide. Its function is as follows. Zinc metalloprotease that specifically cleaves 'Lys-63'-linked polyubiquitin chains. Does not cleave 'Lys-48'-linked polyubiquitin chains. Plays a role in signal transduction for cell growth and MYC induction mediated by IL-2 and GM-CSF. Potentiates BMP (bone morphogenetic protein) signaling by antagonizing the inhibitory action of SMAD6 and SMAD7. Has a key role in regulation of cell surface receptor-mediated endocytosis and ubiquitin-dependent sorting of receptors to lysosomes. Endosomal localization of STAMBP is required for efficient EGFR degradation but not for its internalization. Involved in the negative regulation of PI3K-AKT-mTOR and RAS-MAP signaling pathways. This Rattus norvegicus (Rat) protein is STAM-binding protein (Stambp).